We begin with the raw amino-acid sequence, 200 residues long: MARCKS-related protein (200 aa).

Residues 1-200 are disordered; sequence MGSQSSKAPR…PTPASAEQNE (200 aa). Residue Gly2 is the site of N-myristoyl glycine attachment. Position 14 is a phosphothreonine (Thr14). A compositionally biased stretch (low complexity) spans 16–26; sequence EEAAGASPAKA. Residues Ser22, Ser36, and Ser48 each carry the phosphoserine modification. Positions 53–64 are enriched in low complexity; it reads GTDEAAGATGDA. Phosphoserine is present on Ser71. Positions 74–85 are enriched in basic and acidic residues; the sequence is AEAKGEVAPKET. Thr85 carries the post-translational modification Phosphothreonine. Residues 86 to 98 show a composition bias toward basic residues; it reads PKKKKKFSFKKPF. An effector domain involved in lipid-binding and calmodulin-binding region spans residues 87 to 110; it reads KKKKKFSFKKPFKLSGLSFKRNRK. A phosphoserine; by PKC mark is found at Ser93, Ser101, and Ser104. Ser119 is subject to Phosphoserine. At Ser120 the chain carries Phosphoserine; by MAPK8. Phosphoserine is present on residues Ser132 and Ser135. Thr148 bears the Phosphothreonine; by MAPK8 mark. A phosphoserine mark is found at Ser151, Ser162, and Ser165. The segment covering 156–165 has biased composition (low complexity); the sequence is AKGAEASAAS. At Thr170 the chain carries Phosphothreonine. Residues 178 to 200 show a composition bias toward low complexity; sequence AAEPSTPSGPESGPTPASAEQNE. A Phosphothreonine; by MAPK8 modification is found at Thr183. Residue Thr192 is modified to Phosphothreonine.

This sequence belongs to the MARCKS family. In terms of assembly, binds to filamentous actin (F-actin), but not to monomeric G-actin, independently of its phosphorylation status. Interacts with calmodulin. Phosphorylated. Phosphorylation at Ser-120 and Thr-183 is non-redundantly catalyzed by MAPK8 in vivo. Phosphorylation at Thr-148 is preferentially catalyzed by MAPK8 in vivo, but this modification can also be catalyzed by other kinases in the absence of MAPK8. May be phosphorylated by protein kinase C, which disrupts the interaction with calmodulin. In terms of tissue distribution, expressed at high levels in brain cortex and hippocampus, including dentate gyrus, anterior olfactory nucleus, primary olfactory cortex, entorhinal cortex, medial preoptic area and dorsomedial hypothalamic nucleus (at protein level). Expressed in neuronal cells (at protein level). Detected in the retina. Strongly expressed in testis and uterus; expressed at lower levels in cerebellum, cerebrum, adipose tissue, spleen, kidney, thyroid, liver, lung, skeletal muscle and heart. Detected in T-cells and B-cells.

It is found in the cytoplasm. Its subcellular location is the cytoskeleton. The protein localises to the cell membrane. Its function is as follows. Involved in the control of cell movement by regulating actin cytoskeleton homeostasis and filopodium and lamellipodium formation. When unphosphorylated, induces cell migration. When phosphorylated by MAPK8, induces actin bundles formation and stabilization, thereby reducing actin plasticity, hence restricting cell movement, including neuronal migration. May be involved in coupling the protein kinase C and calmodulin signal transduction systems. The polypeptide is MARCKS-related protein (Marcksl1) (Mus musculus (Mouse)).